A 558-amino-acid chain; its full sequence is Polypeptide N-acetylgalactosaminyltransferase 16 (558 aa).

Topologically, residues 1-6 (MRKIRA) are cytoplasmic. Residues 7–26 (NAIAILTVAWILGTFYYLWQ) traverse the membrane as a helical; Signal-anchor for type II membrane protein segment. Residues 27-558 (DNRAHAASSG…AQQWQLLPHT (532 aa)) are Lumenal-facing. The segment at 33-54 (ASSGGRGAQRAGRRSEQLREDR) is disordered. Residues 45-54 (RRSEQLREDR) show a composition bias toward basic and acidic residues. Cystine bridges form between Cys113–Cys340, Cys331–Cys409, Cys441–Cys460, Cys486–Cys506, and Cys530–Cys543. The segment at 122 to 227 (LPATSVIITF…TEWLPPMLQR (106 aa)) is catalytic subdomain A. Residues Asp163 and Arg188 each contribute to the substrate site. Asp211 contacts Mn(2+). Ser212 contributes to the substrate binding site. His213 lines the Mn(2+) pocket. A catalytic subdomain B region spans residues 286-348 (PIRTPVIAGG…PCSRVGHVFR (63 aa)). Trp317 is a binding site for substrate. Residue His345 participates in Mn(2+) binding. Positions 348, 351, and 353 each coordinate substrate. The 128-residue stretch at 428 to 555 (KEALPGIIKQ…DAQAQQWQLL (128 aa)) folds into the Ricin B-type lectin domain.

Belongs to the glycosyltransferase 2 family. GalNAc-T subfamily. The cofactor is Mn(2+).

Its subcellular location is the golgi apparatus membrane. It catalyses the reaction L-seryl-[protein] + UDP-N-acetyl-alpha-D-galactosamine = a 3-O-[N-acetyl-alpha-D-galactosaminyl]-L-seryl-[protein] + UDP + H(+). It carries out the reaction L-threonyl-[protein] + UDP-N-acetyl-alpha-D-galactosamine = a 3-O-[N-acetyl-alpha-D-galactosaminyl]-L-threonyl-[protein] + UDP + H(+). The protein operates within protein modification; protein glycosylation. In terms of biological role, catalyzes the initial reaction in O-linked oligosaccharide biosynthesis, the transfer of an N-acetyl-D-galactosamine residue to a serine or threonine residue on the protein receptor. In Homo sapiens (Human), this protein is Polypeptide N-acetylgalactosaminyltransferase 16 (GALNT16).